The sequence spans 338 residues: UDP-3-O-acylglucosamine N-acyltransferase (338 aa).

His-251 (proton acceptor) is an active-site residue.

This sequence belongs to the transferase hexapeptide repeat family. LpxD subfamily. In terms of assembly, homotrimer.

It carries out the reaction a UDP-3-O-[(3R)-3-hydroxyacyl]-alpha-D-glucosamine + a (3R)-hydroxyacyl-[ACP] = a UDP-2-N,3-O-bis[(3R)-3-hydroxyacyl]-alpha-D-glucosamine + holo-[ACP] + H(+). Its pathway is bacterial outer membrane biogenesis; LPS lipid A biosynthesis. Catalyzes the N-acylation of UDP-3-O-acylglucosamine using 3-hydroxyacyl-ACP as the acyl donor. Is involved in the biosynthesis of lipid A, a phosphorylated glycolipid that anchors the lipopolysaccharide to the outer membrane of the cell. This Psychrobacter cryohalolentis (strain ATCC BAA-1226 / DSM 17306 / VKM B-2378 / K5) protein is UDP-3-O-acylglucosamine N-acyltransferase.